Here is a 554-residue protein sequence, read N- to C-terminus: Kinesin-like protein 3 (554 aa).

Residues 3 to 325 (SIKVVCRIRP…LRFGHRAKSI (323 aa)) form the Kinesin motor domain. Residues 84-91 (GQTGSGKT) and 233-240 (GSESVGKS) each bind ATP. The stretch at 446 to 473 (LSSTKQQLSDLMTALGDAQERYVELVKN) forms a coiled coil.

It belongs to the TRAFAC class myosin-kinesin ATPase superfamily. Kinesin family.

The protein localises to the cytoplasm. It localises to the cytoskeleton. In terms of biological role, cytoplasmic motor that could play a role in Golgi membrane recycling. This is Kinesin-like protein 3 (klp3) from Schizosaccharomyces pombe (strain 972 / ATCC 24843) (Fission yeast).